Consider the following 263-residue polypeptide: Indole-3-glycerol phosphate synthase (263 aa).

This sequence belongs to the TrpC family.

The enzyme catalyses 1-(2-carboxyphenylamino)-1-deoxy-D-ribulose 5-phosphate + H(+) = (1S,2R)-1-C-(indol-3-yl)glycerol 3-phosphate + CO2 + H2O. The protein operates within amino-acid biosynthesis; L-tryptophan biosynthesis; L-tryptophan from chorismate: step 4/5. In Desulfosudis oleivorans (strain DSM 6200 / JCM 39069 / Hxd3) (Desulfococcus oleovorans), this protein is Indole-3-glycerol phosphate synthase.